Reading from the N-terminus, the 612-residue chain is Lipoma-preferred partner (612 aa).

Disordered regions lie at residues 1-118 and 132-219; these read MSHP…SSLD and ECSS…SSRP. Positions 26 to 40 are enriched in polar residues; that stretch reads THSFGNPSISVSTQQ. Residues 41-53 are compositionally biased toward low complexity; the sequence is PPKKFAPVVAPKP. N6-acetyllysine is present on Lys-108. Phosphoserine occurs at positions 116 and 151. Polar residues-rich tracts occupy residues 143–158 and 171–181; these read QSST…STPV and PLTATKKSTLK. Residues 183-193 show a composition bias toward pro residues; sequence QPAPQAGPIPV. Residues 209–219 show a composition bias toward polar residues; sequence SYTTASTSSRP. 2 positions are modified to phosphotyrosine: Tyr-244 and Tyr-301. A disordered region spans residues 307–387; that stretch reads YGGRNDSDPT…LGPSSVAPSF (81 aa). Positions 314-323 are enriched in polar residues; that stretch reads DPTYGQQGHP. Residue Lys-327 forms a Glycyl lysine isopeptide (Lys-Gly) (interchain with G-Cter in SUMO1) linkage. Thr-333 is modified (phosphothreonine). A Phosphoserine modification is found at Ser-375. 3 consecutive LIM zinc-binding domains span residues 414 to 473, 474 to 534, and 535 to 603; these read GRCA…INTL, EQCN…KFAP, and RCSV…RIRV.

It belongs to the zyxin/ajuba family. Interacts with VASP, with PDZ domains of SCRIB and with ACTN1/alpha-actinin. Expressed in a wide variety of tissues but no or very low expression in brain and peripheral leukocytes.

The protein resides in the nucleus. Its subcellular location is the cytoplasm. The protein localises to the cell junction. It localises to the cell membrane. Its function is as follows. May play a structural role at sites of cell adhesion in maintaining cell shape and motility. In addition to these structural functions, it may also be implicated in signaling events and activation of gene transcription. May be involved in signal transduction from cell adhesion sites to the nucleus allowing successful integration of signals arising from soluble factors and cell-cell adhesion sites. Also suggested to serve as a scaffold protein upon which distinct protein complexes are assembled in the cytoplasm and in the nucleus. The chain is Lipoma-preferred partner (LPP) from Homo sapiens (Human).